A 131-amino-acid chain; its full sequence is Small ribosomal subunit protein uS11 (131 aa).

This sequence belongs to the universal ribosomal protein uS11 family. As to quaternary structure, part of the 30S ribosomal subunit. Interacts with proteins S7 and S18. Binds to IF-3.

Functionally, located on the platform of the 30S subunit, it bridges several disparate RNA helices of the 16S rRNA. Forms part of the Shine-Dalgarno cleft in the 70S ribosome. This Bacillus licheniformis (strain ATCC 14580 / DSM 13 / JCM 2505 / CCUG 7422 / NBRC 12200 / NCIMB 9375 / NCTC 10341 / NRRL NRS-1264 / Gibson 46) protein is Small ribosomal subunit protein uS11.